Here is a 196-residue protein sequence, read N- to C-terminus: Small ribosomal subunit protein uS4m (196 aa).

The S4 RNA-binding domain occupies 88–154 (KRLDVILVRL…FKSNIRKNFQ (67 aa)).

It belongs to the universal ribosomal protein uS4 family.

The protein localises to the mitochondrion. In Marchantia polymorpha (Common liverwort), this protein is Small ribosomal subunit protein uS4m (RPS4).